Here is a 284-residue protein sequence, read N- to C-terminus: Undecaprenyl-diphosphatase (284 aa).

A run of 8 helical transmembrane segments spans residues 7 to 27 (IILG…TGHL), 44 to 64 (EMFD…LYFH), 90 to 110 (LWLK…PLND), 116 to 136 (FYHF…FIVI), 167 to 187 (VLSL…ALLI), 197 to 217 (FTFF…ILHF), 229 to 249 (FGVL…AIKF), and 259 to 279 (FTFF…YAAF).

The protein belongs to the UppP family.

The protein resides in the cell membrane. It carries out the reaction di-trans,octa-cis-undecaprenyl diphosphate + H2O = di-trans,octa-cis-undecaprenyl phosphate + phosphate + H(+). Its function is as follows. Catalyzes the dephosphorylation of undecaprenyl diphosphate (UPP). Confers resistance to bacitracin. The sequence is that of Undecaprenyl-diphosphatase from Lactococcus lactis subsp. cremoris (strain MG1363).